The chain runs to 2718 residues: MFTTRKEVDAHVHKMLGKLQPGRERDIKGLAVARLYMKVQEYPKAIEYLNGYLRVRDDAVGHNMIATCYSRLNPPDVTEALQHYQRSIQIDPRQSEVVIDACELLVKENNASITECARYWLDQANSLDLSGNKQVFNLRMRVNLADSNGERDDTSGGDGEQNTLEILMYKELQARPQDVNIRIQLLRSYVEKMKIDQAFNYALKTELESKNCTSQSNEWYEQIWMVLFKIEMAKDVKKNWRFWHFALHTLDRLVQLSLEGSGLADSSKQLFRLDQYLFKFSTSIERSGDAPQRDLHQACIDHFTGQLLLHAVTLIFKREVLANKNKWMSTLRSALPLLLLGYQVRPIDDSSTNQWIKHCDAEQKQLIQMWRPQGAFRCAQLGRTLLGCLDRSQMEIKNDRENAEFDENKNSGNSMPGLFADSEELLASAHQQCLDKSWRSQIYQQLFTHAEHKLKDTSSHLVRNLRLQLPLFEWPNLAHIENYELQALVLPPHSLAQHVYLALGTDPNKLGDAPRVVFYEGFQRDVKQNLNYCGQDSISQVDVDLYLYATTIQTRRKLQIQREVYDSSNLGNRNAAARPHMMPFANLVGQLGAPEQSNWWDLVVRLNSNQLITEGNRAEQRAQLQHGLEAVRGVNGPKADAIIIFQLGKILNSRSDRSSLEARIDTLYRQGFSILRHQHNQQMESYVRVFKYGSAGSTAAWQDLQSLAEEAVTYFSEKMFRIGQYEQFLDEVRGLHLPMAYFLQSEACHHLEESSKLPRTSRDRYSERRRECLQKTQKLIKNDDKHPLIAAMHRHQQDRNSRGIDNSFGSPDVHNNSSAYEDAEDDFYSHAAFSANRSRRQLEVTPVTPIVMAQPSQEMEQAVKQISKSLCVLKDDVSVGMEAMRQDIKVLTEKFTGLEDLLKKIKISSRDTPTRDVDPAAALGLDDLFIIEDALAEHQQQQQHQQQQSHNQGAIHPVVPNPYTSGFYNGMPNTPSAQERFLQGPYGSPMFNQNQMYNYYAAQAQAQAQAQFLRTPPAPGSIPPPNMFGPRNPNFGLPSMFPPPTVPSVAPYIDAMGNFTQPPPSLIPPPAQPAAPPAPLNILESKPVVALPTPGFFNTTTPVFGASPIQVPQSKPLTVPTVPIPSTAPAPPIAGTVNPPATTAVPPPVHIPQVAPSVPAQPPAPAPVSVPSMFNRALNNQPVEKEPPANVVITSSDPLPKPTTASVQPTLSVTIPAQHIKPSLVQAPEQPAQSAQPAQPSVSGVGSLSFNFGSKSSESPFSFKTQVAKAAAEKQKEQEEAEQNQSGATDPNKTLPQDTSADDYDPRPDFKPIIPLPDEVEVRTGEEGEDIKFTSRAKLFRYVDKEWKERGTGVIKILCDKATGVSRVLMRRDQTHKVCANHTITADITINVANQDKDKKSLLWAANDFADEQVTLERFLVRFKTGELAEEFRVAFTKASEAAKSKETVKPTVNTAEKGSTATAPAAFKSFVTSTPAANSLINKPQEQTKTQPNPDPPATAAKSLFGTLSVSAAPATSAPASATPFASFSFTPNGSSGFGTSTASPFGNLSFGTASAVGSGNNTTLFTTALIKDNTVQGKTLQQESQLNKSNSSDAEEEYVPTAQFVPVIALPDIVEVVTGEENEDVLFEHRAKLLRWDKEANEWKERGLGNMKLLRDRTDPNKVRLLMRREQVHKLCCNQRLLPETKFTYATNCKAAVTWGAQDYSDEELTTALLAVRFKSQDICQQFLEAVQKAQQSIGNEPKKEEVPSAAGEKEKPIKGFGDAFKPKAGSWNCQACYTNNGQDQLYCLACQEPKDATVPPKQSGLDQGNALNLTTSSSNKFSFGFASSATLPATGGFSFGGATQPKEKPAVAVVTASASAPTSVQTAALGFGKSSMTSGFGDAFKPAVGSWSCSACYVNNPGESLYCSACDAPKNDTVPQKEKSLGSGLNLPPTSKFSFGFGAAAAGDKDQAGDGATFNFAAMPAAVAPTTSIGSSSFTFSMTKPKPDQQQPNSTAAKEDEDNDSQEVEEEENNTYFSPVIPLPDKIDVKTGEEDEELLYVHKAKLYRLNESDWKERGLGDVKILRHRQTKKLRVVMRREQVFKICLNHVLNENVVYREKTETSWMFAVHDFSEGESVLERFTLRFKNKEVAQGFMEAIKNALNETAKPIEDSPVVGSVSQSTEANKPSQKNDGAAKSRGGESEVLDVGKTSSVRPTTHEVIPPLPMTLPLLTLPQPLAKPNDYQTPATILFKGSSLSRNNSSASEASKTPSSAFIFGSTDKSEPGKDAGPLANLQKLASGEGQGNVLGSIFRSGSSNENSSDGSVKFFFGGGNKAAEQQKKDSSESVFGGNKADSQSPATQEAPKLAFGGIAAPVFGDANPFGGHKVNLQKSDGKEEPKSIIGGTPLLFGGSNAFGIPKIETQSPAKDFVFGSAPAFGQMATFSFTAAKNEKEKDITSNNTTDLKAEGKEKKELVPETTSTFADLAKTGSTFADLASNPGGTFADLANKTGNDFANLSANSQGTTVGFNKSAGGGFYNLTHQNAFKNFESPQATEECDDDGDATTDDNYDPHYDAIVELPDEIVVTTGEENETKLFGERAKLYRYDAESKQWKERGVGEIKVLEHPELQTFRLIMRQEQIHKLVLNMNISASLQMDYMNAQMKSFLWAGYNYAVDAEGKVDTEGVLERLACRFAKEEIASEFLNTVNSCIKRAKALQGDEENKNDDAPEEQASS.

The interval 1–100 (MFTTRKEVDA…DPRQSEVVID (100 aa)) is sufficient for interaction with Hsp83. Residues 1-200 (MFTTRKEVDA…EKMKIDQAFN (200 aa)) are sufficient for interaction with piwi. TPR repeat units follow at residues 26-58 (DIKGLAVARLYMKVQEYPKAIEYLNGYLRVRDD) and 59-94 (AVGHNMIATCYSRLNPPDVTEALQHYQRSIQIDPRQ). 2 disordered regions span residues 796–816 (QQDRNSRGIDNSFGSPDVHNN) and 937–959 (EHQQQQQHQQQQSHNQGAIHPVV). Polar residues predominate over residues 803-816 (GIDNSFGSPDVHNN). Repeat unit 1 spans residues 808–809 (FG). The segment at 808–2581 (FGSPDVHNNS…GEENETKLFG (1774 aa)) is 27 X 2 AA repeats of F-G. A compositionally biased stretch (low complexity) spans 938–948 (HQQQQQHQQQQ). 3 consecutive repeat copies span residues 1028–1029 (FG), 1035–1036 (FG), and 1104–1105 (FG). Residues 1181 to 1208 (QPVEKEPPANVVITSSDPLPKPTTASVQ) are disordered. Polar residues predominate over residues 1192–1208 (VITSSDPLPKPTTASVQ). Copy 5 of the repeat occupies 1252–1253 (FG). Disordered stretches follow at residues 1263-1314 (FKTQ…KPII) and 1483-1502 (NKPQEQTKTQPNPDPPATAA). The segment covering 1284–1299 (NQSGATDPNKTLPQDT) has biased composition (polar residues). Positions 1309-1445 (DFKPIIPLPD…FTKASEAAKS (137 aa)) constitute a RanBD1 1 domain. A compositionally biased stretch (polar residues) spans 1483-1493 (NKPQEQTKTQP). 4 consecutive repeat copies span residues 1506–1507 (FG), 1539–1540 (FG), 1547–1548 (FG), and 1552–1553 (FG). The region spanning 1605-1742 (QFVPVIALPD…VQKAQQSIGN (138 aa)) is the RanBD1 2 domain. Residues 1738-1761 (QSIGNEPKKEEVPSAAGEKEKPIK) are disordered. Residues 1743–1760 (EPKKEEVPSAAGEKEKPI) show a composition bias toward basic and acidic residues. Copy 10 of the repeat occupies 1763–1764 (FG). The RanBP2-type 1 zinc-finger motif lies at 1770–1799 (KAGSWNCQACYTNNGQDQLYCLACQEPKDA). 4 consecutive repeat copies span residues 1826–1827 (FG), 1842–1843 (FG), 1874–1875 (FG), and 1883–1884 (FG). The segment at 1890–1919 (AVGSWSCSACYVNNPGESLYCSACDAPKND) adopts a RanBP2-type 2 zinc-finger fold. A run of 2 repeats spans residues 1942–1943 (FG) and 1944–1945 (FG). Disordered stretches follow at residues 1981-2021 (FTFS…TYFS), 2154-2204 (EDSP…THEV), and 2239-2273 (SLSRNNSSASEASKTPSSAFIFGSTDKSEPGKDAG). Over residues 2002-2016 (EDEDNDSQEVEEEEN) the composition is skewed to acidic residues. Residues 2019-2151 (YFSPVIPLPD…IKNALNETAK (133 aa)) form the RanBD1 3 domain. Residues 2161–2175 (SVSQSTEANKPSQKN) show a composition bias toward polar residues. The segment covering 2239–2257 (SLSRNNSSASEASKTPSSA) has biased composition (low complexity). 11 repeat units span residues 2260 to 2261 (FG), 2313 to 2314 (FG), 2332 to 2333 (FG), 2352 to 2353 (FG), 2360 to 2361 (FG), 2366 to 2367 (FG), 2393 to 2394 (FG), 2399 to 2400 (FG), 2415 to 2416 (FG), 2421 to 2422 (FG), and 2580 to 2581 (FG). A disordered region spans residues 2320 to 2346 (AEQQKKDSSESVFGGNKADSQSPATQE). A RanBD1 4 domain is found at 2556–2699 (HYDAIVELPD…VNSCIKRAKA (144 aa)).

Belongs to the RanBP2 E3 ligase family. As to quaternary structure, part of the nuclear pore complex. Forms a complex with Nxt1, sbr/Nxf1 and RanGAP. Interacts (via TPR repeats) with Hsp83; the interaction is required for the nuclear import of the sesquiterpenoid juvenile hormone receptor Met. Interacts (via N-terminus) with piwi. As to expression, expressed in both oocytes and nurse cells (at protein level).

It localises to the nucleus. Its subcellular location is the nuclear pore complex. Its function is as follows. E3 SUMO-protein ligase. Component of the nuclear pore complex (NPC), a complex required for trafficking across the nuclear envelope. Required for nuclear import of nuclear localization signal (NLS)-containing proteins in an importin alpha/importin beta-dependent manner, but also for the nuclear import of specific proteins such as phosphorylated Mad or the sesquiterpenoid juvenile hormone receptor Met as part of the juvenile hormone signal transduction pathway. Plays a role in nuclear mRNA export by recruiting the mRNA transport complex composed of Nxt1 and sbr/Nxf1 to the NPC. Essential during germline development for transposon silencing and piRNA biogenesis probably by regulating piwi localization to the nucleus. During oogenesis, required to form granules that modulate the biogenesis of annulate lamellae containing nuclear pore complex components. The sequence is that of E3 SUMO-protein ligase RanBP2 from Drosophila melanogaster (Fruit fly).